The chain runs to 395 residues: 1-deoxy-D-xylulose 5-phosphate reductoisomerase (395 aa).

NADPH contacts are provided by Thr10, Gly11, Ser12, Ile13, Asn38, and Asn122. Lys123 serves as a coordination point for 1-deoxy-D-xylulose 5-phosphate. Glu124 is an NADPH binding site. Asp148 contributes to the Mn(2+) binding site. Residues Ser149, Glu150, Ser178, and His200 each coordinate 1-deoxy-D-xylulose 5-phosphate. Glu150 is a binding site for Mn(2+). Gly206 contacts NADPH. 1-deoxy-D-xylulose 5-phosphate is bound by residues Ser213, Asn218, Lys219, and Glu222. A Mn(2+)-binding site is contributed by Glu222.

It belongs to the DXR family. Requires Mg(2+) as cofactor. Mn(2+) serves as cofactor.

It catalyses the reaction 2-C-methyl-D-erythritol 4-phosphate + NADP(+) = 1-deoxy-D-xylulose 5-phosphate + NADPH + H(+). Its pathway is isoprenoid biosynthesis; isopentenyl diphosphate biosynthesis via DXP pathway; isopentenyl diphosphate from 1-deoxy-D-xylulose 5-phosphate: step 1/6. Functionally, catalyzes the NADPH-dependent rearrangement and reduction of 1-deoxy-D-xylulose-5-phosphate (DXP) to 2-C-methyl-D-erythritol 4-phosphate (MEP). The chain is 1-deoxy-D-xylulose 5-phosphate reductoisomerase from Elusimicrobium minutum (strain Pei191).